Consider the following 367-residue polypeptide: Flagellar P-ring protein (367 aa).

Residues 1–24 form the signal peptide; that stretch reads MLRPIITLLCLTLMLCTAAGPAGA.

This sequence belongs to the FlgI family. As to quaternary structure, the basal body constitutes a major portion of the flagellar organelle and consists of four rings (L,P,S, and M) mounted on a central rod.

The protein resides in the periplasm. The protein localises to the bacterial flagellum basal body. Assembles around the rod to form the L-ring and probably protects the motor/basal body from shearing forces during rotation. This Syntrophotalea carbinolica (strain DSM 2380 / NBRC 103641 / GraBd1) (Pelobacter carbinolicus) protein is Flagellar P-ring protein.